The primary structure comprises 162 residues: Caveolin-2 (162 aa).

Residues Met1–Lys86 are Cytoplasmic-facing. A Phosphotyrosine; by SRC modification is found at Tyr19. A phosphoserine mark is found at Ser20 and Ser23. A Phosphotyrosine; by SRC modification is found at Tyr27. Ser36 carries the phosphoserine modification. The segment at residues Phe87 to Leu107 is an intramembrane region (helical). At Ser108–Asp162 the chain is on the cytoplasmic side.

This sequence belongs to the caveolin family. Monomer or homodimer. Interacts with CAV1; the interaction forms a stable heterooligomeric complex that is required for targeting to lipid rafts and for caveolae formation. Tyrosine phosphorylated forms do not form heterooligomers with the Tyr-19-phosphorylated form existing as a monomer or dimer, and the Tyr-27-form as a monomer only. Interacts (tyrosine phosphorylated form) with the SH2 domain-containing proteins, RASA1, NCK1 and SRC. Interacts (tyrosine phosphorylated form) with INSR, the interaction (Tyr-27-phosphorylated form) is increased on insulin stimulation. Interacts (Tyr-19 phosphorylated form) with MAPK1 (phosphorylated form); the interaction, promoted by insulin, leads to nuclear location and MAPK1 activation. Interacts with STAT3; the interaction is increased on insulin-induced tyrosine phosphorylation leading to STAT activation. Post-translationally, phosphorylated on serine and tyrosine residues. CAV1 promotes phosphorylation on Ser-23 which then targets the complex to the plasma membrane, lipid rafts and caveolae. Phosphorylation on Ser-36 appears to modulate mitosis in endothelial cells. Phosphorylation on both Tyr-19 and Tyr-27 is required for insulin-induced 'Ser-727' phosphorylation of STAT3 and its activation. Phosphorylation on Tyr-19 is required for insulin-induced phosphorylation of MAPK1 and DNA binding of STAT3. Tyrosine phosphorylation is induced by both EGF and insulin (By. similarity).

It is found in the nucleus. It localises to the cytoplasm. The protein resides in the golgi apparatus membrane. The protein localises to the cell membrane. Its subcellular location is the membrane. It is found in the caveola. In terms of biological role, may act as a scaffolding protein within caveolar membranes. Interacts directly with G-protein alpha subunits and can functionally regulate their activity. Acts as an accessory protein in conjunction with CAV1 in targeting to lipid rafts and driving caveolae formation. The Ser-36 phosphorylated form has a role in modulating mitosis in endothelial cells. Positive regulator of cellular mitogenesis of the MAPK signaling pathway. Required for the insulin-stimulated nuclear translocation and activation of MAPK1 and STAT3, and the subsequent regulation of cell cycle progression. This chain is Caveolin-2 (CAV2), found in Pan troglodytes (Chimpanzee).